The following is a 186-amino-acid chain: Two-component response regulator ARR6 (186 aa).

The region spanning 26 to 153 (HVLAVDDSHV…DVKRLRDSLM (128 aa)) is the Response regulatory domain. At Asp86 the chain carries 4-aspartylphosphate.

This sequence belongs to the ARR family. Type-A subfamily. Two-component system major event consists of a His-to-Asp phosphorelay between a sensor histidine kinase (HK) and a response regulator (RR). In plants, the His-to-Asp phosphorelay involves an additional intermediate named Histidine-containing phosphotransfer protein (HPt). This multistep phosphorelay consists of a His-Asp-His-Asp sequential transfer of a phosphate group between first a His and an Asp of the HK protein, followed by the transfer to a conserved His of the HPt protein and finally the transfer to an Asp in the receiver domain of the RR protein. As to expression, predominantly expressed in roots.

It is found in the nucleus. Functions as a response regulator involved in His-to-Asp phosphorelay signal transduction system. Phosphorylation of the Asp residue in the receiver domain activates the ability of the protein to promote the transcription of target genes. Type-A response regulators seem to act as negative regulators of the cytokinin signaling. This Arabidopsis thaliana (Mouse-ear cress) protein is Two-component response regulator ARR6 (ARR6).